The sequence spans 159 residues: uncharacterized protein (159 aa).

The protein to M.jannaschii MJECL20.

This is an uncharacterized protein from Methanocaldococcus jannaschii (strain ATCC 43067 / DSM 2661 / JAL-1 / JCM 10045 / NBRC 100440) (Methanococcus jannaschii).